Reading from the N-terminus, the 275-residue chain is Fructose permease IID component (275 aa).

Residues 5 to 274 (KRLTKKEIFS…GILGYWAGFL (270 aa)) enclose the PTS EIID domain. The next 5 helical transmembrane spans lie at 100-120 (MKIG…WGTI), 127-147 (LGAS…FFLL), 187-207 (ILGL…NIPI), 227-247 (VLDS…VAWM), and 255-275 (LLII…GFLA).

The protein localises to the cell membrane. Functionally, the phosphoenolpyruvate-dependent sugar phosphotransferase system (PTS), a major carbohydrate active -transport system, catalyzes the phosphorylation of incoming sugar substrates concomitant with their translocation across the cell membrane. This system is involved in fructose transport. The polypeptide is Fructose permease IID component (levG) (Bacillus subtilis (strain 168)).